The following is a 370-amino-acid chain: MKVYVLLVFLTLCSAKPLFHPSYLTLKNLMLKDMEDEGDSDADNSLFPTREPINPFFPFDLFSTCPFGCQCYSRVVHCSDLGLSSVPSNIPFDTRMVDLQNNKIKEIKENDFKGLTSLYALILNNNKLTKIHPKAFLTTKKLRRLYLSHNQLSEIPLNLPKSLAELRIHDNKVKKIQKATFKGMNALHVLEMSANPLDNNGIEPGAFEGVTVFHIRIAEAKLTSIPKELPSTLLELHLDYNKISVVELEDFKRYKDLQRLGLGNNRITDIENGSLANIPRVREIHLENNKLKKVPSGLQELKYLQIIFLHSNSITKVGVNDFCPTVPKMKKSLYSAISLSNNPVKYWEVQPATFRCVLSRMSVQLGNFRK.

An N-terminal signal peptide occupies residues 1-15 (MKVYVLLVFLTLCSA). Serine 45 carries O-linked (GalNAc...) serine glycosylation. Positions 56–92 (FFPFDLFSTCPFGCQCYSRVVHCSDLGLSSVPSNIPF) constitute an LRRNT domain. 2 cysteine pairs are disulfide-bonded: cysteine 65/cysteine 71 and cysteine 69/cysteine 78. LRR repeat units follow at residues 93–114 (DTRMVDLQNNKIKEIKENDFKG), 117–138 (SLYALILNNNKLTKIHPKAFLT), 141–163 (KLRRLYLSHNQLSEIPLNLPKSL), 164–183 (AELRIHDNKVKKIQKATFKG), 186–209 (ALHVLEMSANPLDNNGIEPGAFEG), 232–253 (TLLELHLDYNKISVVELEDFKR), 256–277 (DLQRLGLGNNRITDIENGSLAN), 280–302 (RVREIHLENNKLKKVPSGLQELK), 303–324 (YLQIIFLHSNSITKVGVNDFCP), 332–354 (SLYSAISLSNNPVKYWEVQPATF), and 355–370 (RCVLSRMSVQLGNFRK). Residue asparagine 272 is glycosylated (N-linked (GlcNAc...) asparagine). Cysteine 323 and cysteine 356 are joined by a disulfide.

The protein belongs to the small leucine-rich proteoglycan (SLRP) family. SLRP class I subfamily.

The protein localises to the secreted. It localises to the extracellular space. It is found in the extracellular matrix. The sequence is that of Asporin (ASPN) from Bos taurus (Bovine).